The following is a 358-amino-acid chain: Mitogen-activated protein kinase 1 (358 aa).

Alanine 2 is modified (N-acetylalanine). The Protein kinase domain occupies 23 to 311; it reads YTNLSYIGEG…VEQALAHPYL (289 aa). Serine 27 is modified (phosphoserine; by SGK1). Residues 29 to 37 and lysine 52 each bind ATP; that span reads IGEGAYGMV. Aspartate 147 functions as the Proton acceptor in the catalytic mechanism. Residue threonine 183 is modified to Phosphothreonine; by MAP2K1 and MAP2K2. A TXY motif is present at residues 183–185; it reads TEY. A Phosphotyrosine; by MAP2K1 and MAP2K2 modification is found at tyrosine 185. The residue at position 188 (threonine 188) is a Phosphothreonine; by autocatalysis. Residues serine 244, serine 246, and serine 282 each carry the phosphoserine modification.

Belongs to the protein kinase superfamily. CMGC Ser/Thr protein kinase family. MAP kinase subfamily. In terms of assembly, binds both upstream activators and downstream substrates in multimolecular complexes. This interaction inhibits its tyrosine-kinase activity. Interacts with ADAM15, ARHGEF2, ARRB2, DAPK1 (via death domain), HSF4, IER3, IPO7, NISCH, SGK1, and isoform 1 of NEK2. Interacts (via phosphorylated form) with TPR (via C-terminal region and phosphorylated form); the interaction requires dimerization of MAPK1/ERK2 and increases following EGF stimulation. Interacts with MAP2K1. Interacts with DUSP6. Interacts (phosphorylated form) with CAV2 ('Tyr-19'-phosphorylated form); the interaction, promoted by insulin, leads to nuclear location and MAPK1 activation. Interacts with DCC. Interacts with MORG1. Interacts with PEA15. Interacts with MKNK2. MKNK2 isoform 1 binding prevents from dephosphorylation and inactivation. The phosphorylated form interacts with PML. Interacts with STYX. Interacts with CDK2AP2. Interacts with CAVIN4. Interacts with DUSP7; the interaction enhances DUSP7 phosphatase activity. Interacts with GIT1; this interaction is necessary for MAPK1 localization to focal adhesions. Interacts with ZNF263. Interacts with phosphoglycerate kinase PGK1; the interaction is direct, occurs under hypoxic conditions, and promotes interaction between PGK1 and PIN1. It depends on Mg(2+) as a cofactor. Post-translationally, dually phosphorylated on Thr-183 and Tyr-185, which activates the enzyme. Ligand-activated ALK induces tyrosine phosphorylation. Dephosphorylated by PTPRJ at Tyr-185. Phosphorylated upon FLT3 and KIT signaling. Dephosphorylated by DUSP1 and DUSP2 at Thr-183 and Tyr-185. ISGylated. In terms of processing, ubiquitinated by TRIM15 via 'Lys-63'-linked ubiquitination; leading to activation. Deubiquitinated by CYLD. In terms of tissue distribution, widely expressed.

The protein resides in the cytoplasm. Its subcellular location is the cytoskeleton. The protein localises to the spindle. It localises to the nucleus. It is found in the microtubule organizing center. The protein resides in the centrosome. Its subcellular location is the membrane. The protein localises to the caveola. It localises to the cell junction. It is found in the focal adhesion. The enzyme catalyses L-seryl-[protein] + ATP = O-phospho-L-seryl-[protein] + ADP + H(+). The catalysed reaction is L-threonyl-[protein] + ATP = O-phospho-L-threonyl-[protein] + ADP + H(+). Its activity is regulated as follows. Phosphorylated by MAP2K1/MEK1 and MAP2K2/MEK2 on Thr-183 and Tyr-185 in response to external stimuli like insulin or NGF. Both phosphorylations are required for activity. This phosphorylation causes dramatic conformational changes, which enable full activation and interaction of MAPK1/ERK2 with its substrates. Phosphorylation on Ser-27 by SGK1 results in its activation by enhancing its interaction with MAP2K1/MEK1 and MAP2K2/MEK2. Dephosphorylated and inactivated by DUSP1, DUSP3, DUSP6 and DUSP9. Inactivated by pyrimidylpyrrole inhibitors. Its function is as follows. Serine/threonine kinase which acts as an essential component of the MAP kinase signal transduction pathway. MAPK1/ERK2 and MAPK3/ERK1 are the 2 MAPKs which play an important role in the MAPK/ERK cascade. They participate also in a signaling cascade initiated by activated KIT and KITLG/SCF. Depending on the cellular context, the MAPK/ERK cascade mediates diverse biological functions such as cell growth, adhesion, survival and differentiation through the regulation of transcription, translation, cytoskeletal rearrangements. The MAPK/ERK cascade also plays a role in initiation and regulation of meiosis, mitosis, and postmitotic functions in differentiated cells by phosphorylating a number of transcription factors. About 160 substrates have already been discovered for ERKs. Many of these substrates are localized in the nucleus, and seem to participate in the regulation of transcription upon stimulation. However, other substrates are found in the cytosol as well as in other cellular organelles, and those are responsible for processes such as translation, mitosis and apoptosis. Moreover, the MAPK/ERK cascade is also involved in the regulation of the endosomal dynamics, including lysosome processing and endosome cycling through the perinuclear recycling compartment (PNRC); as well as in the fragmentation of the Golgi apparatus during mitosis. The substrates include transcription factors (such as ATF2, BCL6, ELK1, ERF, FOS, HSF4 or SPZ1), cytoskeletal elements (such as CANX, CTTN, GJA1, MAP2, MAPT, PXN, SORBS3 or STMN1), regulators of apoptosis (such as BAD, BTG2, CASP9, DAPK1, IER3, MCL1 or PPARG), regulators of translation (such as EIF4EBP1 and FXR1) and a variety of other signaling-related molecules (like ARHGEF2, DCC, FRS2 or GRB10). Protein kinases (such as RAF1, RPS6KA1/RSK1, RPS6KA3/RSK2, RPS6KA2/RSK3, RPS6KA6/RSK4, SYK, MKNK1/MNK1, MKNK2/MNK2, RPS6KA5/MSK1, RPS6KA4/MSK2, MAPKAPK3 or MAPKAPK5) and phosphatases (such as DUSP1, DUSP4, DUSP6 or DUSP16) are other substrates which enable the propagation the MAPK/ERK signal to additional cytosolic and nuclear targets, thereby extending the specificity of the cascade. Mediates phosphorylation of TPR in response to EGF stimulation. May play a role in the spindle assembly checkpoint. Phosphorylates PML and promotes its interaction with PIN1, leading to PML degradation. Phosphorylates CDK2AP2. Phosphorylates phosphoglycerate kinase PGK1 under hypoxic conditions to promote its targeting to the mitochondrion and suppress the formation of acetyl-coenzyme A from pyruvate. Functionally, acts as a transcriptional repressor. Binds to a [GC]AAA[GC] consensus sequence. Repress the expression of interferon gamma-induced genes. Seems to bind to the promoter of CCL5, DMP1, IFIH1, IFITM1, IRF7, IRF9, LAMP3, OAS1, OAS2, OAS3 and STAT1. Transcriptional activity is independent of kinase activity. This Mus musculus (Mouse) protein is Mitogen-activated protein kinase 1.